Reading from the N-terminus, the 173-residue chain is Adenine phosphoribosyltransferase (173 aa).

It belongs to the purine/pyrimidine phosphoribosyltransferase family. As to quaternary structure, homodimer.

Its subcellular location is the cytoplasm. The enzyme catalyses AMP + diphosphate = 5-phospho-alpha-D-ribose 1-diphosphate + adenine. It functions in the pathway purine metabolism; AMP biosynthesis via salvage pathway; AMP from adenine: step 1/1. Its function is as follows. Catalyzes a salvage reaction resulting in the formation of AMP, that is energically less costly than de novo synthesis. The chain is Adenine phosphoribosyltransferase from Chloroflexus aurantiacus (strain ATCC 29366 / DSM 635 / J-10-fl).